The primary structure comprises 340 residues: Glycerol-3-phosphate dehydrogenase [NAD(P)+] (340 aa).

NADPH-binding residues include serine 11, tryptophan 12, arginine 33, and lysine 106. Sn-glycerol 3-phosphate contacts are provided by lysine 106, glycine 137, and serine 139. Residue alanine 141 coordinates NADPH. Residues lysine 192, aspartate 245, serine 255, arginine 256, and asparagine 257 each coordinate sn-glycerol 3-phosphate. Residue lysine 192 is the Proton acceptor of the active site. Arginine 256 is an NADPH binding site. The NADPH site is built by valine 280 and glutamate 282.

Belongs to the NAD-dependent glycerol-3-phosphate dehydrogenase family.

The protein resides in the cytoplasm. The enzyme catalyses sn-glycerol 3-phosphate + NAD(+) = dihydroxyacetone phosphate + NADH + H(+). It carries out the reaction sn-glycerol 3-phosphate + NADP(+) = dihydroxyacetone phosphate + NADPH + H(+). Its pathway is membrane lipid metabolism; glycerophospholipid metabolism. Its function is as follows. Catalyzes the reduction of the glycolytic intermediate dihydroxyacetone phosphate (DHAP) to sn-glycerol 3-phosphate (G3P), the key precursor for phospholipid synthesis. This chain is Glycerol-3-phosphate dehydrogenase [NAD(P)+], found in Bacillus anthracis (strain A0248).